We begin with the raw amino-acid sequence, 559 residues long: 3-phosphoinositide-dependent protein kinase 1 (559 aa).

Y9 carries the post-translational modification Phosphotyrosine; by SRC and INSR. S25 is subject to Phosphoserine. The interval 25–83 (SPSMVRSQTEPSSSPGIPSGVSRQGSTMDGTTAEARPSTNPLQQHPAQLPPQPRKKRPE) is disordered. Low complexity predominate over residues 35–46 (PSSSPGIPSGVS). A Protein kinase domain is found at 85–345 (FKFGKILGEG…YGPLKAHPFF (261 aa)). ATP is bound by residues 95-97 (SFS) and K114. The segment at 116 to 160 (LEKRHIIKENKVPYVTRERDVMSRLDHPFFVKLYFTFQDDEKLYF) is PIF-pocket. ATP is bound by residues 163–165 (SYA) and E169. D208 functions as the Proton acceptor in the catalytic mechanism. 2 residues coordinate ATP: E212 and D226. Phosphoserine is present on S244. Position 307 is an N6-acetyllysine (K307). T357 bears the Phosphothreonine; by MELK mark. Phosphotyrosine; by SRC and INSR occurs at positions 376 and 379. Phosphoserine is present on S396. A Phosphoserine; by MAP3K5 modification is found at S397. At S399 the chain carries Phosphoserine. Phosphoserine; by MAP3K5 is present on S401. Phosphoserine is present on S413. The PH domain occupies 462 to 553 (KMGPVDKRKG…EVWRQQYQSS (92 aa)). S504 is modified (phosphoserine; by PKC/PRKCQ). A Phosphothreonine; by autocatalysis modification is found at T516. At S532 the chain carries Phosphoserine; by PKC/PRKCQ.

It belongs to the protein kinase superfamily. AGC Ser/Thr protein kinase family. PDPK1 subfamily. Homodimer in its autoinhibited state. Active as monomer. Interacts with NPRL2, PPARG, PAK1, PTK2B, GRB14, PKN1 (via C-terminus), STRAP and IKKB. The Tyr-9 phosphorylated form interacts with SRC, RASA1 and CRK (via their SH2 domains). Interacts with SGK3 in a phosphorylation-dependent manner. The tyrosine-phosphorylated form interacts with PTPN6. The Ser-244 phosphorylated form interacts with YWHAH and YWHAQ. Binds INSR in response to insulin. Interacts (via PH domain) with SMAD3, SMAD4 and SMAD7. Interacts with PKN2; the interaction stimulates PDPK1 autophosphorylation, its PI(3,4,5)P3-dependent kinase activity toward 'Ser-473' of AKT1 but also activates its kinase activity toward PRKCD and PRKCZ. In terms of processing, phosphorylation on Ser-244 in the activation loop is required for full activity. PDPK1 itself can autophosphorylate Ser-244, leading to its own activation. Autophosphorylation is inhibited by the apoptotic C-terminus cleavage product of PKN2. Tyr-9 phosphorylation is critical for stabilization of both PDPK1 and the PDPK1/SRC complex via HSP90-mediated protection of PDPK1 degradation. Angiotensin II stimulates the tyrosine phosphorylation of PDPK1 in vascular smooth muscle in a calcium- and SRC-dependent manner. Phosphorylated on Tyr-9, Tyr-376 and Tyr-379 by INSR in response to insulin. Palmitate negatively regulates autophosphorylation at Ser-244 and palmitate-induced phosphorylation at Ser-532 and Ser-504 by PKC/PRKCQ negatively regulates its ability to phosphorylate PKB/AKT1. Phosphorylation at Thr-357 by MELK partially inhibits kinase activity, the inhibition is cooperatively enhanced by phosphorylation at Ser-397 and Ser-401 by MAP3K5. Post-translationally, monoubiquitinated in the kinase domain, deubiquitinated by USP4.

The protein localises to the cytoplasm. It is found in the nucleus. Its subcellular location is the cell membrane. The protein resides in the cell junction. It localises to the focal adhesion. It carries out the reaction L-seryl-[protein] + ATP = O-phospho-L-seryl-[protein] + ADP + H(+). The enzyme catalyses L-threonyl-[protein] + ATP = O-phospho-L-threonyl-[protein] + ADP + H(+). Homodimerization regulates its activity by maintaining the kinase in an autoinhibitory conformation. NPRL2 down-regulates its activity by interfering with tyrosine phosphorylation at the Tyr-9, Tyr-376 and Tyr-379 residues. The 14-3-3 protein YWHAQ acts as a negative regulator by association with the residues surrounding the Ser-244 residue. STRAP positively regulates its activity by enhancing its autophosphorylation and by stimulating its dissociation from YWHAQ. SMAD2, SMAD3, SMAD4 and SMAD7 also positively regulate its activity by stimulating its dissociation from YWHAQ. Activated by phosphorylation on Tyr-9, Tyr-376 and Tyr-379 by INSR in response to insulin. Serine/threonine kinase which acts as a master kinase, phosphorylating and activating a subgroup of the AGC family of protein kinases. Its targets include: protein kinase B (PKB/AKT1, PKB/AKT2, PKB/AKT3), p70 ribosomal protein S6 kinase (RPS6KB1), p90 ribosomal protein S6 kinase (RPS6KA1, RPS6KA2 and RPS6KA3), cyclic AMP-dependent protein kinase (PRKACA), protein kinase C (PRKCD and PRKCZ), serum and glucocorticoid-inducible kinase (SGK1, SGK2 and SGK3), p21-activated kinase-1 (PAK1), TSSK3, protein kinase PKN (PKN1 and PKN2). Plays a central role in the transduction of signals from insulin by providing the activating phosphorylation to PKB/AKT1, thus propagating the signal to downstream targets controlling cell proliferation and survival, as well as glucose and amino acid uptake and storage. Negatively regulates the TGF-beta-induced signaling by: modulating the association of SMAD3 and SMAD7 with TGF-beta receptor, phosphorylating SMAD2, SMAD3, SMAD4 and SMAD7, preventing the nuclear translocation of SMAD3 and SMAD4 and the translocation of SMAD7 from the nucleus to the cytoplasm in response to TGF-beta. Activates PPARG transcriptional activity and promotes adipocyte differentiation. Activates the NF-kappa-B pathway via phosphorylation of IKKB. The tyrosine phosphorylated form is crucial for the regulation of focal adhesions by angiotensin II. Controls proliferation, survival, and growth of developing pancreatic cells. Participates in the regulation of Ca(2+) entry and Ca(2+)-activated K(+) channels of mast cells. Essential for the motility of vascular endothelial cells (ECs) and is involved in the regulation of their chemotaxis. Plays a critical role in cardiac homeostasis by serving as a dual effector for cell survival and beta-adrenergic response. Plays an important role during thymocyte development by regulating the expression of key nutrient receptors on the surface of pre-T cells and mediating Notch-induced cell growth and proliferative responses. Provides negative feedback inhibition to toll-like receptor-mediated NF-kappa-B activation in macrophages. This Rattus norvegicus (Rat) protein is 3-phosphoinositide-dependent protein kinase 1 (Pdpk1).